The primary structure comprises 171 residues: MLRAGGRRLLAPGLRRVLGGGAAAPVAVGGAKAYHERVVDHYENPRNVGSFENDDPSVGTGLVGAPACGDVMKLQIRVDESSGKIVDACFKTFGCGSAIASSSVATEWVKGKQMEEVVTIKNTEIAKHLSLPPVKLHCSMLAEDAIKAAVKDYEAKKAKLAQKGEEKAAEA.

Residues Met-1–Asp-55 constitute a mitochondrion transit peptide.

This sequence belongs to the NifU family. In terms of assembly, component of the core Fe-S cluster (ISC) assembly machinery. [2Fe-2S] cluster serves as cofactor.

Its subcellular location is the mitochondrion matrix. It functions in the pathway cofactor biosynthesis; iron-sulfur cluster biosynthesis. In terms of biological role, scaffold protein for the de novo synthesis of iron-sulfur (Fe-S) clusters within mitochondria, which is required for maturation of both mitochondrial and cytoplasmic [2Fe-2S] and [4Fe-4S] proteins. First, a [2Fe-2S] cluster is transiently assembled on the scaffold protein ISCU (ISU1, ISU2 or ISU3). In a second step, the cluster is released from ISCU, transferred to a glutaredoxin, followed by the formation of mitochondrial [2Fe-2S] proteins, the synthesis of [4Fe-4S] clusters and their target-specific insertion into the recipient apoproteins. Cluster assembly on ISCU depends on the function of the cysteine desulfurase complex NFS1-ISD11, which serves as the sulfur donor for cluster synthesis, the iron-binding protein frataxin as the putative iron donor, and the electron transfer chain comprised of ferredoxin reductase and ferredoxin, which receive their electrons from NADH. The chain is Iron-sulfur cluster assembly protein 1 from Oryza sativa subsp. japonica (Rice).